The following is a 284-amino-acid chain: Elongation factor Ts (284 aa).

Positions 80–83 (TDFV) are involved in Mg(2+) ion dislocation from EF-Tu.

Belongs to the EF-Ts family.

It localises to the cytoplasm. Associates with the EF-Tu.GDP complex and induces the exchange of GDP to GTP. It remains bound to the aminoacyl-tRNA.EF-Tu.GTP complex up to the GTP hydrolysis stage on the ribosome. The chain is Elongation factor Ts from Neisseria meningitidis serogroup A / serotype 4A (strain DSM 15465 / Z2491).